The chain runs to 255 residues: 5-oxoprolinase subunit A (255 aa).

It belongs to the LamB/PxpA family. As to quaternary structure, forms a complex composed of PxpA, PxpB and PxpC.

It catalyses the reaction 5-oxo-L-proline + ATP + 2 H2O = L-glutamate + ADP + phosphate + H(+). Catalyzes the cleavage of 5-oxoproline to form L-glutamate coupled to the hydrolysis of ATP to ADP and inorganic phosphate. This is 5-oxoprolinase subunit A from Pyrococcus horikoshii (strain ATCC 700860 / DSM 12428 / JCM 9974 / NBRC 100139 / OT-3).